A 122-amino-acid polypeptide reads, in one-letter code: Large ribosomal subunit protein bL12 (122 aa).

It belongs to the bacterial ribosomal protein bL12 family. As to quaternary structure, homodimer. Part of the ribosomal stalk of the 50S ribosomal subunit. Forms a multimeric L10(L12)X complex, where L10 forms an elongated spine to which 2 to 4 L12 dimers bind in a sequential fashion. Binds GTP-bound translation factors.

In terms of biological role, forms part of the ribosomal stalk which helps the ribosome interact with GTP-bound translation factors. Is thus essential for accurate translation. In Sulfurimonas denitrificans (strain ATCC 33889 / DSM 1251) (Thiomicrospira denitrificans (strain ATCC 33889 / DSM 1251)), this protein is Large ribosomal subunit protein bL12.